The sequence spans 228 residues: Probable endo-1,4-beta-xylanase A (228 aa).

The signal sequence occupies residues 1–18; the sequence is MVSFSYLLLACSAIGALA. An N-linked (GlcNAc...) asparagine glycan is attached at asparagine 29. The GH11 domain maps to 40-228; it reads AGTPSSTGWN…SSGSASITVY (189 aa). Glutamate 124 serves as the catalytic Nucleophile. Glutamate 215 serves as the catalytic Proton donor.

The protein belongs to the glycosyl hydrolase 11 (cellulase G) family.

It is found in the secreted. The enzyme catalyses Endohydrolysis of (1-&gt;4)-beta-D-xylosidic linkages in xylans.. The protein operates within glycan degradation; xylan degradation. Functionally, endo-1,4-beta-xylanase involved in the hydrolysis of xylan, a major structural heterogeneous polysaccharide found in plant biomass representing the second most abundant polysaccharide in the biosphere, after cellulose. The chain is Probable endo-1,4-beta-xylanase A (xlnA) from Aspergillus fumigatus (strain CBS 144.89 / FGSC A1163 / CEA10) (Neosartorya fumigata).